A 443-amino-acid chain; its full sequence is MQVTPTLNEGLKRAFTVVVPSADLQARRDARLAEVAKTIKLPGFRPGKVPASLVKQRYGESVNAELLEEAVNDATAKLFEEQKIRPAMQPKIEVVSAIEDGKDLEFKVETEVLPEIEVPDLSGLKLTRLGAKVSEETVDKALNDVARRSRKFETIEEDRPAAKGDVLCVDFVGKLDGTPFDGGTADDVNVEIGGEGFIPGFAEQMEGMKAGEERVINVTFPADYQAEELAGKAVTFDIKAKSLKKAVDPAIDDELAKTIGFENLEQIRKIITEQAEGEYQQLSRLRIKRDLLDALSEKTDFEAPSSMVDAEFNQIWARVEEDRKVGRLDEEDAGKDEETLKADYRRIAERRVKLGLLLAEIGRKQEIQVSREELLGAMQQEARRYPGQEQMVFEFFSKNPQAVEGLRGPILENKVVDYLIELADVTDKEVTPEELAEIPPAEL.

In terms of domain architecture, PPIase FKBP-type spans 164 to 249 (GDVLCVDFVG…AKSLKKAVDP (86 aa)).

It belongs to the FKBP-type PPIase family. Tig subfamily.

Its subcellular location is the cytoplasm. It catalyses the reaction [protein]-peptidylproline (omega=180) = [protein]-peptidylproline (omega=0). Functionally, involved in protein export. Acts as a chaperone by maintaining the newly synthesized protein in an open conformation. Functions as a peptidyl-prolyl cis-trans isomerase. The polypeptide is Trigger factor (Gluconobacter oxydans (strain 621H) (Gluconobacter suboxydans)).